We begin with the raw amino-acid sequence, 268 residues long: tRNA pseudouridine synthase A (268 aa).

The active-site Nucleophile is Asp54. A substrate-binding site is contributed by Tyr112.

It belongs to the tRNA pseudouridine synthase TruA family. In terms of assembly, homodimer.

The catalysed reaction is uridine(38/39/40) in tRNA = pseudouridine(38/39/40) in tRNA. Its function is as follows. Formation of pseudouridine at positions 38, 39 and 40 in the anticodon stem and loop of transfer RNAs. The sequence is that of tRNA pseudouridine synthase A from Bordetella petrii (strain ATCC BAA-461 / DSM 12804 / CCUG 43448).